Consider the following 206-residue polypeptide: Imidazoleglycerol-phosphate dehydratase (206 aa).

The protein belongs to the imidazoleglycerol-phosphate dehydratase family.

The protein resides in the cytoplasm. The catalysed reaction is D-erythro-1-(imidazol-4-yl)glycerol 3-phosphate = 3-(imidazol-4-yl)-2-oxopropyl phosphate + H2O. The protein operates within amino-acid biosynthesis; L-histidine biosynthesis; L-histidine from 5-phospho-alpha-D-ribose 1-diphosphate: step 6/9. In Cutibacterium acnes (strain DSM 16379 / KPA171202) (Propionibacterium acnes), this protein is Imidazoleglycerol-phosphate dehydratase.